The sequence spans 179 residues: Small ribosomal subunit protein uS7 (179 aa).

It belongs to the universal ribosomal protein uS7 family. Part of the 30S ribosomal subunit. Contacts proteins S9 and S11.

Its function is as follows. One of the primary rRNA binding proteins, it binds directly to 16S rRNA where it nucleates assembly of the head domain of the 30S subunit. Is located at the subunit interface close to the decoding center, probably blocks exit of the E-site tRNA. This is Small ribosomal subunit protein uS7 from Shigella flexneri serotype 5b (strain 8401).